The chain runs to 448 residues: Glutamyl-tRNA reductase (448 aa).

Residues 49–52 (TCNR), Ser109, 114–116 (ETQ), and Gln120 contribute to the substrate site. Catalysis depends on Cys50, which acts as the Nucleophile. 189–194 (GAGEMS) is a binding site for NADP(+).

It belongs to the glutamyl-tRNA reductase family. In terms of assembly, homodimer.

The enzyme catalyses (S)-4-amino-5-oxopentanoate + tRNA(Glu) + NADP(+) = L-glutamyl-tRNA(Glu) + NADPH + H(+). The protein operates within porphyrin-containing compound metabolism; protoporphyrin-IX biosynthesis; 5-aminolevulinate from L-glutamyl-tRNA(Glu): step 1/2. In terms of biological role, catalyzes the NADPH-dependent reduction of glutamyl-tRNA(Glu) to glutamate 1-semialdehyde (GSA). This Staphylococcus aureus (strain NCTC 8325 / PS 47) protein is Glutamyl-tRNA reductase.